A 726-amino-acid chain; its full sequence is Amino-acid acetyltransferase, mitochondrial (726 aa).

Residues 1–18 (MSSRTLVGLRSTTSTHLQ) show a composition bias toward polar residues. A mitochondrion-targeting transit peptide spans 1-44 (MSSRTLVGLRSTTSTHLQRSGVAAAAAVSSSSTSSSGSAPRRCL). A disordered region spans residues 1–64 (MSSRTLVGLR…SAEFSSSSKS (64 aa)). Low complexity predominate over residues 20-39 (SGVAAAAAVSSSSTSSSGSA). A compositionally biased stretch (polar residues) spans 45–58 (SSASGRQVQQSAEF). In terms of domain architecture, N-acetyltransferase spans 547 to 716 (DRPRLGLDDP…YEAVCRSIQP (170 aa)).

This sequence belongs to the acetyltransferase family.

The protein localises to the mitochondrion. It catalyses the reaction L-glutamate + acetyl-CoA = N-acetyl-L-glutamate + CoA + H(+). It functions in the pathway amino-acid biosynthesis; L-arginine biosynthesis; N(2)-acetyl-L-ornithine from L-glutamate: step 1/4. N-acetylglutamate synthase involved in arginine biosynthesis. In Aspergillus niger (strain ATCC MYA-4892 / CBS 513.88 / FGSC A1513), this protein is Amino-acid acetyltransferase, mitochondrial (arg2).